The chain runs to 504 residues: Anaerobic nitric oxide reductase transcription regulator NorR (504 aa).

Asp57 is subject to 4-aspartylphosphate. Residues 187 to 416 form the Sigma-54 factor interaction domain; that stretch reads MIGLSPGMTQ…LEHAIHRAVV (230 aa). Residues 215 to 222 and 278 to 287 contribute to the ATP site; these read GETGTGKE and ADNGTLFLDE. The segment at residues 479-498 is a DNA-binding region (H-T-H motif); that stretch reads WAACARMLETDVANLHRLAK.

The protein operates within nitrogen metabolism; nitric oxide reduction. In terms of biological role, required for the expression of anaerobic nitric oxide (NO) reductase, acts as a transcriptional activator for at least the norVW operon. Activation also requires sigma-54. This is Anaerobic nitric oxide reductase transcription regulator NorR from Escherichia coli O45:K1 (strain S88 / ExPEC).